The following is a 629-amino-acid chain: tRNA uridine 5-carboxymethylaminomethyl modification enzyme MnmG (629 aa).

FAD is bound by residues 13–18 (GGGHAG), Val125, and Ser180. 273–287 (GPRYCPSIEDKVMRF) contacts NAD(+). Gln370 contacts FAD.

Belongs to the MnmG family. Homodimer. Heterotetramer of two MnmE and two MnmG subunits. Requires FAD as cofactor.

It is found in the cytoplasm. In terms of biological role, NAD-binding protein involved in the addition of a carboxymethylaminomethyl (cmnm) group at the wobble position (U34) of certain tRNAs, forming tRNA-cmnm(5)s(2)U34. In Escherichia coli O127:H6 (strain E2348/69 / EPEC), this protein is tRNA uridine 5-carboxymethylaminomethyl modification enzyme MnmG.